We begin with the raw amino-acid sequence, 1652 residues long: Maestro heat-like repeat-containing protein family member 1 (1652 aa).

7 HEAT repeats span residues 3–41 (ETYA…SKPA), 260–300 (EEQL…VGSR), 344–382 (CCSP…AAAA), 385–423 (EVKK…HGYL), 1369–1407 (LMLL…GSPD), 1410–1448 (QTHS…LMDL), and 1616–1652 (QVDL…VKFA).

Belongs to the MROH1 family. Homooligomer; homooligomerizes at lysosome scission sites.

The protein resides in the lysosome membrane. Functionally, lysosome fission factor. Recruited to lysosomes by RAB7 (RAB7A or RAB7B) at scission sites and homooligomerizes to mediate the constriction and scission of lysosomal tubules. May sever membranes by inserting amphipathic helices into one bilayer leaflet. Lysosome fission is required to maintain their steady-state number, shape, size, composition and function, and to accomplish regeneration. This Bos taurus (Bovine) protein is Maestro heat-like repeat-containing protein family member 1 (MROH1).